The following is a 240-amino-acid chain: HTH-type transcriptional regulator Mce2R (240 aa).

The region spanning 9 to 77 is the HTH gntR-type domain; sequence RSVPEEVFEQ…QGDVTTVRDF (69 aa). The segment at residues 37–56 is a DNA-binding region (H-T-H motif); that stretch reads ERRLAELLGVSRPAVREALK.

Functionally, negatively regulates the expression of its operon as well as expression of end (endonuclease 4). The chain is HTH-type transcriptional regulator Mce2R (mce2R) from Mycobacterium tuberculosis (strain CDC 1551 / Oshkosh).